The sequence spans 485 residues: Choline/ethanolamine transporter flvcr2b (485 aa).

At 1–46 (MDTRFNDINRVKMGDESKSVDGEVNDNTYYSKTDAEVNFEHRYTTP) the chain is on the cytoplasmic side. The chain crosses the membrane as a helical span at residues 47 to 71 (ETRLYKKRWVIVCLFSSYSLCNSYQ). Positions 68 and 72 each coordinate choline. Over 72–89 (WIQYGIINNIFMRFYGVD) the chain is Extracellular. The chain crosses the membrane as a helical span at residues 90-117 (SFTIDWMSMIYMLTYIPLIFPVSWLLDK). The Cytoplasmic segment spans residues 118-119 (KG). A helical membrane pass occupies residues 120 to 139 (LRVIALVAAALNCAGTWIKV). Residues 140–146 (ASARPDL) lie on the Extracellular side of the membrane. Residues 147-175 (FPVTFLGQFTCSVAQVFILGMPSRIASVW) traverse the membrane as a helical segment. Glutamine 161 and leucine 165 together coordinate choline. Residues 176 to 180 (FGSDE) are Cytoplasmic-facing. A helical transmembrane segment spans residues 181 to 206 (VSTACSIGVFGNQLGIAIGFLVPPIL). Residues 207-211 (VPNVD) are Extracellular-facing. The helical transmembrane segment at 212-241 (DLDELAAHIRVMFYITAGVATFLFVLVVIV) threads the bilayer. The Cytoplasmic segment spans residues 242-277 (FQERPEIPPTLAQAAARRISPESYSYTASILRLLRN). Residues 278–308 (KAFILLVITYGLNVGCFYAVSTLLNRMIIEH) traverse the membrane as a helical segment. Tyrosine 295 is a binding site for choline. The Extracellular portion of the chain corresponds to 309–312 (YPGE). A helical membrane pass occupies residues 313–341 (EVNAGRIGLTIVVAGMVGSLICGIWLDRS). Topologically, residues 342–343 (KT) are cytoplasmic. Residues 344–366 (YKQTTLAVYLMSLMGLVIYAFTL) traverse the membrane as a helical segment. Over 367 to 369 (DLH) the chain is Extracellular. The chain crosses the membrane as a helical span at residues 370-399 (HLWVVFITAGALGFFMTGYLPLGFEFAVEL). Over 400 to 407 (TYPESEGT) the chain is Cytoplasmic. A helical transmembrane segment spans residues 408 to 433 (SSGLLNCSAQVFGIIFTICQGKIMDS). Glutamine 417 is a binding site for choline. The Extracellular portion of the chain corresponds to 434-435 (FG). A helical membrane pass occupies residues 436-458 (TLAGNLFLCAFLLIGTIITGCIK). At 459–485 (SDLRRQLANQQAQTADHLDTSPTQTRF) the chain is on the cytoplasmic side.

It belongs to the major facilitator superfamily. Feline leukemia virus subgroup C receptor (TC 2.A.1.28.1) family.

The protein resides in the cell membrane. It is found in the mitochondrion membrane. Its subcellular location is the endoplasmic reticulum membrane. The enzyme catalyses choline(out) = choline(in). The catalysed reaction is ethanolamine(in) = ethanolamine(out). It catalyses the reaction heme b(in) = heme b(out). Functionally, choline uniporter that specifically mediates choline uptake at the blood-brain-barrier. Responsible for the majority of choline uptake across the blood-brain-barrier from the circulation into the brain. Choline, a nutrient critical for brain development, is a precursor of phosphatidylcholine, as well as betaine. Also mediates transport of ethanolamine. Choline and ethanolamine transport is not coupled with proton transport and is exclusively driven by the choline gradient across the plasma membrane. Also acts as a heme b transporter. The sequence is that of Choline/ethanolamine transporter flvcr2b from Danio rerio (Zebrafish).